The following is a 767-amino-acid chain: 5-methyltetrahydropteroyltriglutamate--homocysteine methyltransferase (767 aa).

5-methyltetrahydropteroyltri-L-glutamate contacts are provided by residues 17–20 (RELK) and Lys117. L-homocysteine is bound by residues 441–443 (IGS) and Glu494. L-methionine contacts are provided by residues 441-443 (IGS) and Glu494. 5-methyltetrahydropteroyltri-L-glutamate contacts are provided by residues 525 to 526 (RC) and Trp571. Asp609 serves as a coordination point for L-homocysteine. Asp609 serves as a coordination point for L-methionine. Glu615 lines the 5-methyltetrahydropteroyltri-L-glutamate pocket. Zn(2+)-binding residues include His652, Cys654, and Glu676. The active-site Proton donor is the His705. Cys737 is a binding site for Zn(2+).

Belongs to the vitamin-B12 independent methionine synthase family. The cofactor is Zn(2+).

The enzyme catalyses 5-methyltetrahydropteroyltri-L-glutamate + L-homocysteine = tetrahydropteroyltri-L-glutamate + L-methionine. The protein operates within amino-acid biosynthesis; L-methionine biosynthesis via de novo pathway; L-methionine from L-homocysteine (MetE route): step 1/1. Catalyzes the transfer of a methyl group from 5-methyltetrahydrofolate to homocysteine resulting in methionine formation. This is 5-methyltetrahydropteroyltriglutamate--homocysteine methyltransferase from Bifidobacterium longum (strain NCC 2705).